Consider the following 576-residue polypeptide: Periodic tryptophan protein 1 (576 aa).

The disordered stretch occupies residues 41–134 (AKATLEEAEG…LPNQEDSQEE (94 aa)). Composition is skewed to acidic residues over residues 46–58 (EEAEGESGVEDDA) and 71–91 (DIDDDLKEYNLEEYDDEEIAD). At S52 the chain carries Phosphoserine. Positions 108–120 (SDVKFHEGEKGED) are enriched in basic and acidic residues. S131 bears the Phosphoserine mark. 6 WD repeats span residues 207 to 252 (AFPL…KAFP), 284 to 324 (HHTD…AARS), 329 to 369 (HSNK…ESQM), 376 to 414 (MAGEEIETVTFASENIILCGTDSGNVYSFDIRNNENRKP), 420 to 461 (AHDA…ATNT), and 472 to 514 (FDVG…SVRK). The disordered stretch occupies residues 530 to 576 (EAQKIGKSSRIARKYTSNDNPDTVITIDDQGEDEEEREGGDEHDDMA). Residues 558–576 (DQGEDEEEREGGDEHDDMA) show a composition bias toward acidic residues.

It belongs to the WD repeat PWP1 family.

The chain is Periodic tryptophan protein 1 (PWP1) from Saccharomyces cerevisiae (strain ATCC 204508 / S288c) (Baker's yeast).